Here is a 127-residue protein sequence, read N- to C-terminus: Large ribosomal subunit protein eL8 (127 aa).

It belongs to the eukaryotic ribosomal protein eL8 family. Part of the 50S ribosomal subunit. Probably part of the RNase P complex.

It localises to the cytoplasm. Multifunctional RNA-binding protein that recognizes the K-turn motif in ribosomal RNA, the RNA component of RNase P, box H/ACA, box C/D and box C'/D' sRNAs. This is Large ribosomal subunit protein eL8 from Saccharolobus islandicus (strain Y.N.15.51 / Yellowstone #2) (Sulfolobus islandicus).